The chain runs to 343 residues: Cytoplasmic tRNA 2-thiolation protein 1 (343 aa).

Belongs to the TtcA family. CTU1/NCS6/ATPBD3 subfamily.

It localises to the cytoplasm. Its pathway is tRNA modification; 5-methoxycarbonylmethyl-2-thiouridine-tRNA biosynthesis. Functionally, plays a central role in 2-thiolation of mcm(5)S(2)U at tRNA wobble positions of tRNA(Lys), tRNA(Glu) and tRNA(Gln). Directly binds tRNAs and probably acts by catalyzing adenylation of tRNAs, an intermediate required for 2-thiolation. It is unclear whether it acts as a sulfurtransferase that transfers sulfur from thiocarboxylated urm1 onto the uridine of tRNAs at wobble position. The protein is Cytoplasmic tRNA 2-thiolation protein 1 (ctu1) of Danio rerio (Zebrafish).